The following is a 169-amino-acid chain: S-ribosylhomocysteine lyase (169 aa).

His-54, His-58, and Cys-128 together coordinate Fe cation.

This sequence belongs to the LuxS family. As to quaternary structure, homodimer. Fe cation serves as cofactor.

It catalyses the reaction S-(5-deoxy-D-ribos-5-yl)-L-homocysteine = (S)-4,5-dihydroxypentane-2,3-dione + L-homocysteine. Involved in the synthesis of autoinducer 2 (AI-2) which is secreted by bacteria and is used to communicate both the cell density and the metabolic potential of the environment. The regulation of gene expression in response to changes in cell density is called quorum sensing. Catalyzes the transformation of S-ribosylhomocysteine (RHC) to homocysteine (HC) and 4,5-dihydroxy-2,3-pentadione (DPD). This is S-ribosylhomocysteine lyase from Shewanella sediminis (strain HAW-EB3).